A 142-amino-acid polypeptide reads, in one-letter code: SsrA-binding protein (142 aa).

This sequence belongs to the SmpB family.

Its subcellular location is the cytoplasm. Functionally, required for rescue of stalled ribosomes mediated by trans-translation. Binds to transfer-messenger RNA (tmRNA), required for stable association of tmRNA with ribosomes. tmRNA and SmpB together mimic tRNA shape, replacing the anticodon stem-loop with SmpB. tmRNA is encoded by the ssrA gene; the 2 termini fold to resemble tRNA(Ala) and it encodes a 'tag peptide', a short internal open reading frame. During trans-translation Ala-aminoacylated tmRNA acts like a tRNA, entering the A-site of stalled ribosomes, displacing the stalled mRNA. The ribosome then switches to translate the ORF on the tmRNA; the nascent peptide is terminated with the 'tag peptide' encoded by the tmRNA and targeted for degradation. The ribosome is freed to recommence translation, which seems to be the essential function of trans-translation. The protein is SsrA-binding protein of Mycoplasma mobile (strain ATCC 43663 / 163K / NCTC 11711) (Mesomycoplasma mobile).